A 150-amino-acid chain; its full sequence is Flagellar assembly factor FliW (150 aa).

The protein belongs to the FliW family. In terms of assembly, interacts with translational regulator CsrA and flagellin(s).

It is found in the cytoplasm. Functionally, acts as an anti-CsrA protein, binds CsrA and prevents it from repressing translation of its target genes, one of which is flagellin. Binds to flagellin and participates in the assembly of the flagellum. The sequence is that of Flagellar assembly factor FliW from Caldanaerobacter subterraneus subsp. tengcongensis (strain DSM 15242 / JCM 11007 / NBRC 100824 / MB4) (Thermoanaerobacter tengcongensis).